Consider the following 430-residue polypeptide: Putative cytochrome P450 139 (430 aa).

C372 is a heme binding site.

The protein belongs to the cytochrome P450 family. Heme is required as a cofactor.

This is Putative cytochrome P450 139 (cyp139) from Mycobacterium bovis (strain ATCC BAA-935 / AF2122/97).